Here is a 340-residue protein sequence, read N- to C-terminus: Ketol-acid reductoisomerase (NADP(+)) (340 aa).

The KARI N-terminal Rossmann domain occupies 1 to 183 (MAVTVYYDKD…GAGRTGIIET (183 aa)). Residues 26-29 (FGSQ), Lys49, Ser54, and 84-87 (DELQ) contribute to the NADP(+) site. His109 is an active-site residue. Gly135 contributes to the NADP(+) binding site. Positions 184-329 (TFKDETETDL…EKLRAMMPWI (146 aa)) constitute a KARI C-terminal knotted domain. Positions 192, 196, 228, and 232 each coordinate Mg(2+). Ser253 is a binding site for substrate.

The protein belongs to the ketol-acid reductoisomerase family. Mg(2+) is required as a cofactor.

It carries out the reaction (2R)-2,3-dihydroxy-3-methylbutanoate + NADP(+) = (2S)-2-acetolactate + NADPH + H(+). The enzyme catalyses (2R,3R)-2,3-dihydroxy-3-methylpentanoate + NADP(+) = (S)-2-ethyl-2-hydroxy-3-oxobutanoate + NADPH + H(+). It functions in the pathway amino-acid biosynthesis; L-isoleucine biosynthesis; L-isoleucine from 2-oxobutanoate: step 2/4. It participates in amino-acid biosynthesis; L-valine biosynthesis; L-valine from pyruvate: step 2/4. Involved in the biosynthesis of branched-chain amino acids (BCAA). Catalyzes an alkyl-migration followed by a ketol-acid reduction of (S)-2-acetolactate (S2AL) to yield (R)-2,3-dihydroxy-isovalerate. In the isomerase reaction, S2AL is rearranged via a Mg-dependent methyl migration to produce 3-hydroxy-3-methyl-2-ketobutyrate (HMKB). In the reductase reaction, this 2-ketoacid undergoes a metal-dependent reduction by NADPH to yield (R)-2,3-dihydroxy-isovalerate. This Campylobacter hominis (strain ATCC BAA-381 / DSM 21671 / CCUG 45161 / LMG 19568 / NCTC 13146 / CH001A) protein is Ketol-acid reductoisomerase (NADP(+)).